A 1093-amino-acid chain; its full sequence is TATA element modulatory factor (1093 aa).

2 disordered regions span residues 38-80 (WAET…SPKA) and 108-189 (TIQK…DMKV). Over residues 51–70 (SPVSGGWDTSTWGLKSNTEP) the composition is skewed to polar residues. Phosphoserine occurs at positions 72, 77, 112, and 136. The segment covering 123–137 (QRPEEEVKSSLHESL) has biased composition (basic and acidic residues). The segment covering 139 to 158 (IGQSRTPETTESQVKDSSLC) has biased composition (polar residues). Positions 173–187 (TEGKHEETVNKESDM) are enriched in basic and acidic residues. 2 positions are modified to phosphoserine: S199 and S217. Over residues 229–238 (PKEQKHEDRQ) the composition is skewed to basic and acidic residues. 2 disordered regions span residues 229–260 (PKEQKHEDRQSNTPSPPVSTFSSGTSTTSDIE) and 266–285 (SVISESSASSRQETTDSKSS). Positions 246-257 (VSTFSSGTSTTS) are enriched in low complexity. S328, S330, S333, S338, S344, S413, S542, S925, and S928 each carry phosphoserine. An interaction with Elongin BC complex region spans residues 333–342 (SLDSRSVSEI). A coiled-coil region spans residues 439–922 (EALSEKEDVC…QETIKEKERK (484 aa)). The interval 919–939 (KERKPFSVSSTPTMSRSSSIS) is disordered. Residues 925-939 (SVSSTPTMSRSSSIS) show a composition bias toward low complexity. A Phosphothreonine modification is found at T929. Residue S933 is modified to Phosphoserine. Residues 984–1092 (SIIENLQSQL…QIDELLRQSL (109 aa)) adopt a coiled-coil conformation.

Interacts with TRNP1; may regulate TRNP1 proteasomal degradation. Component of the SNF/SWI transcription factor complexes. Interacts with RAB6A. Interacts with STAT3 and FER. Interacts with TCEB1. In terms of processing, phosphorylated by FER.

Its subcellular location is the cytoplasm. It is found in the nucleus. The protein resides in the golgi apparatus membrane. Potential coactivator of the androgen receptor. Mediates STAT3 degradation. May play critical roles in two RAB6-dependent retrograde transport processes: one from endosomes to the Golgi and the other from the Golgi to the ER. This protein binds the HIV-1 TATA element and inhibits transcriptional activation by the TATA-binding protein (TBP). The sequence is that of TATA element modulatory factor (TMF1) from Homo sapiens (Human).